The chain runs to 549 residues: MNIKNLRRLYNIIHTFLRYGIDEVIPDIPLTRGIRCGRKSLFWVKNQYPNEPFGVRLRLALQELGPVWIKLGQMLSTRRDLFEPELADQLALLQDSVEAFDGKLARRLIEEALGDKLEKWFDDFDETALASASIAQVHIAKFNQNQPLAGKEVVLKVLRPEIERVIKDDLALMYRLASWIPRLNKEGRRLRPVEVVREYEKTLLDELDLRKEMVNAIRLRNNFENSEMLYVPEMYQEFCHKNVIVMERIYGIPVANIDELKANGTDMKLLAERGVQVFFTQVFRDSFFHADMHPGNIFVNPNHPENPQYIGIDCGIVGTLNQNDKRYLAESFVAFFNRDYRRVALMHVESGWTPADTDIDAFEEAFREVCEPIFAKPLSEISFGHVLLNLFTVARKFNMEVQPQLVLLQKTLLYIEGLGRQVYPQLDLWQTAKPFLQDWLNEQVGFKAMWRDLKQRAPQFREHFAEFPEAMFQALQQQKQINFRLNEINQSLKAQRNNTGFSRLMILGIAIAGTFWKFEMLPLWVSVPLLVIEFRILIWCMSFSNNSYS.

The Protein kinase domain maps to 123-504 (DFDETALASA…QRNNTGFSRL (382 aa)). ATP is bound by residues 129–137 (LASASIAQV) and lysine 156. The Proton acceptor role is filled by aspartate 291. The helical transmembrane segment at 505–525 (MILGIAIAGTFWKFEMLPLWV) threads the bilayer.

It belongs to the ABC1 family. UbiB subfamily.

It localises to the cell inner membrane. Its pathway is cofactor biosynthesis; ubiquinone biosynthesis [regulation]. Its function is as follows. Is probably a protein kinase regulator of UbiI activity which is involved in aerobic coenzyme Q (ubiquinone) biosynthesis. The protein is Probable protein kinase UbiB of Glaesserella parasuis serovar 5 (strain SH0165) (Haemophilus parasuis).